The sequence spans 300 residues: Ribonuclease HIII (300 aa).

Residues 86-300 (RSRIGVDESG…FNEVLGSGNQ (215 aa)) form the RNase H type-2 domain. 3 residues coordinate a divalent metal cation: Asp92, Glu93, and Asp196.

Belongs to the RNase HII family. RnhC subfamily. It depends on Mn(2+) as a cofactor. The cofactor is Mg(2+).

It is found in the cytoplasm. It catalyses the reaction Endonucleolytic cleavage to 5'-phosphomonoester.. Endonuclease that specifically degrades the RNA of RNA-DNA hybrids. The protein is Ribonuclease HIII of Chlamydia trachomatis serovar L2 (strain ATCC VR-902B / DSM 19102 / 434/Bu).